Reading from the N-terminus, the 1228-residue chain is DNA-directed RNA polymerase subunit beta'' (1228 aa).

The Zn(2+) site is built by Cys222, Cys296, Cys303, and Cys306.

It belongs to the RNA polymerase beta' chain family. RpoC2 subfamily. In plastids the minimal PEP RNA polymerase catalytic core is composed of four subunits: alpha, beta, beta', and beta''. When a (nuclear-encoded) sigma factor is associated with the core the holoenzyme is formed, which can initiate transcription. It depends on Zn(2+) as a cofactor.

It is found in the plastid. It localises to the chloroplast. The enzyme catalyses RNA(n) + a ribonucleoside 5'-triphosphate = RNA(n+1) + diphosphate. Functionally, DNA-dependent RNA polymerase catalyzes the transcription of DNA into RNA using the four ribonucleoside triphosphates as substrates. The sequence is that of DNA-directed RNA polymerase subunit beta'' from Gracilaria tenuistipitata var. liui (Red alga).